The sequence spans 288 residues: ATP phosphoribosyltransferase (288 aa).

It belongs to the ATP phosphoribosyltransferase family. Long subfamily. The cofactor is Mg(2+).

The protein localises to the cytoplasm. It catalyses the reaction 1-(5-phospho-beta-D-ribosyl)-ATP + diphosphate = 5-phospho-alpha-D-ribose 1-diphosphate + ATP. It functions in the pathway amino-acid biosynthesis; L-histidine biosynthesis; L-histidine from 5-phospho-alpha-D-ribose 1-diphosphate: step 1/9. Its activity is regulated as follows. Feedback inhibited by histidine. Its function is as follows. Catalyzes the condensation of ATP and 5-phosphoribose 1-diphosphate to form N'-(5'-phosphoribosyl)-ATP (PR-ATP). Has a crucial role in the pathway because the rate of histidine biosynthesis seems to be controlled primarily by regulation of HisG enzymatic activity. This is ATP phosphoribosyltransferase from Methanococcus maripaludis (strain C6 / ATCC BAA-1332).